A 1220-amino-acid polypeptide reads, in one-letter code: DNA-directed RNA polymerase subunit beta' (1220 aa).

Zn(2+)-binding residues include Cys-60, Cys-62, Cys-75, and Cys-78. Residues Asp-449, Asp-451, and Asp-453 each contribute to the Mg(2+) site. Positions 818, 892, 899, and 902 each coordinate Zn(2+).

This sequence belongs to the RNA polymerase beta' chain family. As to quaternary structure, the RNAP catalytic core consists of 2 alpha, 1 beta, 1 beta' and 1 omega subunit. When a sigma factor is associated with the core the holoenzyme is formed, which can initiate transcription. Mg(2+) serves as cofactor. Zn(2+) is required as a cofactor.

The enzyme catalyses RNA(n) + a ribonucleoside 5'-triphosphate = RNA(n+1) + diphosphate. In terms of biological role, DNA-dependent RNA polymerase catalyzes the transcription of DNA into RNA using the four ribonucleoside triphosphates as substrates. The polypeptide is DNA-directed RNA polymerase subunit beta' (Lacticaseibacillus casei (strain BL23) (Lactobacillus casei)).